The following is a 268-amino-acid chain: Proteasome subunit beta type-4 (268 aa).

This sequence belongs to the peptidase T1B family. The 26S proteasome consists of a 20S proteasome core and two 19S regulatory subunits. The 20S proteasome core is composed of 28 subunits that are arranged in four stacked rings, resulting in a barrel-shaped structure. The two end rings are each formed by seven alpha subunits, and the two central rings are each formed by seven beta subunits. The catalytic chamber with the active sites is on the inside of the barrel.

Its subcellular location is the cytoplasm. It is found in the nucleus. Non-catalytic component of the proteasome, a multicatalytic proteinase complex which is characterized by its ability to cleave peptides with Arg, Phe, Tyr, Leu, and Glu adjacent to the leaving group at neutral or slightly basic pH. The proteasome has an ATP-dependent proteolytic activity. This is Proteasome subunit beta type-4 (Prosbeta7) from Drosophila melanogaster (Fruit fly).